The following is a 407-amino-acid chain: 1-deoxy-D-xylulose 5-phosphate reductoisomerase (407 aa).

Residues T25, G26, S27, I28, N53, and N136 each contribute to the NADPH site. K137 serves as a coordination point for 1-deoxy-D-xylulose 5-phosphate. E138 is a binding site for NADPH. D162 contacts Mn(2+). Residues S163, E164, S188, and H211 each contribute to the 1-deoxy-D-xylulose 5-phosphate site. A Mn(2+)-binding site is contributed by E164. Position 217 (G217) interacts with NADPH. The 1-deoxy-D-xylulose 5-phosphate site is built by S224, N229, K230, and E233. A Mn(2+)-binding site is contributed by E233.

This sequence belongs to the DXR family. Mg(2+) serves as cofactor. It depends on Mn(2+) as a cofactor.

It carries out the reaction 2-C-methyl-D-erythritol 4-phosphate + NADP(+) = 1-deoxy-D-xylulose 5-phosphate + NADPH + H(+). The protein operates within isoprenoid biosynthesis; isopentenyl diphosphate biosynthesis via DXP pathway; isopentenyl diphosphate from 1-deoxy-D-xylulose 5-phosphate: step 1/6. Catalyzes the NADPH-dependent rearrangement and reduction of 1-deoxy-D-xylulose-5-phosphate (DXP) to 2-C-methyl-D-erythritol 4-phosphate (MEP). The sequence is that of 1-deoxy-D-xylulose 5-phosphate reductoisomerase from Nitrobacter hamburgensis (strain DSM 10229 / NCIMB 13809 / X14).